The sequence spans 300 residues: Protein N-terminal and lysine N-methyltransferase EFM7 (300 aa).

S-adenosyl-L-methionine-binding positions include tryptophan 75, glycine 101–glycine 103, aspartate 123, tryptophan 156, and serine 179.

Belongs to the class I-like SAM-binding methyltransferase superfamily. EFM7 family.

Its subcellular location is the cytoplasm. Its function is as follows. S-adenosyl-L-methionine-dependent protein methyltransferase that trimethylates the N-terminal glycine 'Gly-2' of elongation factor 1-alpha, before also catalyzing the mono- and dimethylation of 'Lys-3'. This is Protein N-terminal and lysine N-methyltransferase EFM7 from Cryptococcus neoformans var. neoformans serotype D (strain JEC21 / ATCC MYA-565) (Filobasidiella neoformans).